The sequence spans 178 residues: Probetacellulin (178 aa).

A signal peptide spans 1 to 31; sequence MARAAPGSGASPLPLLPALALGLVILHCVVA. Over 32-118 the chain is Extracellular; the sequence is DGNSTRSPED…LFYLRGDRGQ (87 aa). N-linked (GlcNAc...) asparagine glycosylation is present at N34. Positions 65–105 constitute an EGF-like domain; that stretch reads HFSRCPKQYKHYCIKGRCRFVVAEQTPSCVCDEGYAGARCE. Disulfide bonds link C69/C82, C77/C93, and C95/C104. Residues 112–178 constitute a propeptide, removed in mature form; the sequence is LRGDRGQILV…NDDIQETSIA (67 aa). The helical transmembrane segment at 119 to 139 threads the bilayer; it reads ILVICLIAVMVIFIILVVSIC. Residues 140-178 are Cytoplasmic-facing; that stretch reads TCCHPLRKRRKRRKKEEEMETLGKDITPINDDIQETSIA.

Monomer. Interacts with EGFR and ERBB4. As to expression, expressed in a wide range of tissues, including the mammary gland.

It is found in the secreted. It localises to the extracellular space. Its subcellular location is the cell membrane. Functionally, growth factor that binds to EGFR, ERBB4 and other EGF receptor family members. Potent mitogen for retinal pigment epithelial cells and vascular smooth muscle cells. The protein is Probetacellulin (BTC) of Bos taurus (Bovine).